The primary structure comprises 201 residues: Guanylyl cyclase-activating protein 1 (201 aa).

Glycine 2 carries N-myristoyl glycine lipidation. The residue at position 3 (asparagine 3) is a Deamidated asparagine. EF-hand domains are found at residues 31 to 49 (SGQL…KNLS), 51 to 86 (SASQ…VLKG), 87 to 122 (KVEQ…IRAI), and 131 to 166 (TAEE…DQML). Residues aspartate 64, asparagine 66, aspartate 68, tyrosine 70, glutamate 75, aspartate 100, aspartate 102, asparagine 104, cysteine 106, glutamate 111, aspartate 144, asparagine 146, aspartate 148, glutamate 150, and glutamate 155 each coordinate Ca(2+).

In terms of assembly, homodimer. In the retina, it is expressed in rod and cone photoreceptors.

It localises to the membrane. Its subcellular location is the photoreceptor inner segment. The protein localises to the cell projection. It is found in the cilium. The protein resides in the photoreceptor outer segment. In terms of biological role, stimulates retinal guanylyl cyclase when free calcium ions concentration is low and inhibits guanylyl cyclase when free calcium ions concentration is elevated. This Ca(2+)-sensitive regulation of retinal guanylyl cyclase is a key event in recovery of the dark state of rod photoreceptors following light exposure. May be involved in cone photoreceptor light response and recovery of response in bright light. The protein is Guanylyl cyclase-activating protein 1 (GUCA1A) of Homo sapiens (Human).